The primary structure comprises 395 residues: MRN complex-interacting protein (395 aa).

Positions 90-100 (DPKSEQEEAHV) are enriched in basic and acidic residues. Disordered stretches follow at residues 90–155 (DPKS…GGNC) and 180–275 (KRSS…FGES). Residues 104-113 (SKYTDQTTEG) show a composition bias toward polar residues. The span at 117–127 (EKDDEDEDENV) shows a compositional bias: acidic residues. The Nuclear localization signal (NLS) motif lies at 142-145 (RKKM). The span at 183–195 (SSSWNKGSVSKYS) shows a compositional bias: low complexity. Polar residues-rich tracts occupy residues 224-244 (ACSS…QIKS) and 260-270 (QSESPSVSSHQ).

Belongs to the MRNIP family.

Its subcellular location is the nucleus. It is found in the nucleoplasm. Plays a role in the cellular response to DNA damage and the maintenance of genome stability through its association with the MRN damage-sensing complex. Promotes chromatin loading and activity of the MRN complex to facilitate subsequent ATM-mediated DNA damage response signaling and DNA repair. In Danio rerio (Zebrafish), this protein is MRN complex-interacting protein.